The following is a 157-amino-acid chain: MRCPYCGSEDSQVKDSRPAEDGNAIRRRRICPDCGGRFTTFERVQLRELMIIKKTGRKVPFDRDKLLRSFEIALRKRPVDRDRIERAVSGIVRRLESSGETEIPSEEIGLQVLEALKSLDDVAFVRYASVYRDFSHAEDFEKVIAEISAKIARDPGE.

A disordered region spans residues 1-21; sequence MRCPYCGSEDSQVKDSRPAED. A zinc finger spans residues 3-34; it reads CPYCGSEDSQVKDSRPAEDGNAIRRRRICPDC. A compositionally biased stretch (basic and acidic residues) spans 11–21; sequence SQVKDSRPAED. The region spanning 49–139 is the ATP-cone domain; the sequence is LMIIKKTGRK…VYRDFSHAED (91 aa).

Belongs to the NrdR family. The cofactor is Zn(2+).

In terms of biological role, negatively regulates transcription of bacterial ribonucleotide reductase nrd genes and operons by binding to NrdR-boxes. The sequence is that of Transcriptional repressor NrdR from Sinorhizobium medicae (strain WSM419) (Ensifer medicae).